The primary structure comprises 496 residues: Genome polyprotein (496 aa).

The Extracellular segment spans residues 1–447 (SRCTHLENRD…HTVLGGAFNS (447 aa)). 6 cysteine pairs are disulfide-bonded: C3/C30, C60/C116, C60/C121, C74/C105, C92/C116, and C92/C121. Residues 98–111 (DRGWGNHCGLFGKG) are fusion peptide. An N-linked (GlcNAc...) asparagine; by host glycan is attached at N154. 2 disulfides stabilise this stretch: C186–C290 and C307–C338. A helical transmembrane segment spans residues 448 to 468 (IFGGVGFLPKLLMGVALAWLG). Over 469-479 (LNTRNPTMSIS) the chain is Cytoplasmic. Residues 480 to 496 (FLLTGGLVLAMTLGVGA) traverse the membrane as a helical segment.

In terms of assembly, homodimer; in the endoplasmic reticulum and Golgi. Post-translationally, N-glycosylated.

It localises to the virion membrane. It is found in the host endoplasmic reticulum membrane. Its function is as follows. Binds to host cell surface receptor and mediates fusion between viral and cellular membranes. Envelope protein is synthesized in the endoplasmic reticulum in the form of heterodimer with protein prM. They play a role in virion budding in the ER, and the newly formed immature particle is covered with 60 spikes composed of heterodimer between precursor prM and envelope protein E. The virion is transported to the Golgi apparatus where the low pH causes dissociation of PrM-E heterodimers and formation of E homodimers. prM-E cleavage is ineficient, and many virions are only partially matured. These uncleaved prM would play a role in immune evasion. The chain is Genome polyprotein from Louping ill virus (strain SB 526) (Li).